A 160-amino-acid chain; its full sequence is Transcription elongation factor GreA (160 aa).

The stretch at 50–70 (AAREQQSFNEGRIQELEAKLS) forms a coiled coil.

It belongs to the GreA/GreB family.

Functionally, necessary for efficient RNA polymerase transcription elongation past template-encoded arresting sites. The arresting sites in DNA have the property of trapping a certain fraction of elongating RNA polymerases that pass through, resulting in locked ternary complexes. Cleavage of the nascent transcript by cleavage factors such as GreA or GreB allows the resumption of elongation from the new 3'terminus. GreA releases sequences of 2 to 3 nucleotides. This chain is Transcription elongation factor GreA, found in Legionella pneumophila (strain Paris).